The following is a 1733-amino-acid chain: DNA-directed RNA polymerase II subunit RPB1 (1733 aa).

Cys67, Cys70, Cys77, His80, Cys107, Cys110, Cys148, and Cys167 together coordinate Zn(2+). The tract at residues 248-260 is lid loop; it reads PSISFNESQRGED. Residues 306–323 form a rudder loop region; sequence NDIAGQPQALQKSGRPVK. 3 residues coordinate Mg(2+): Asp481, Asp483, and Asp485. Lys695 participates in a covalent cross-link: Glycyl lysine isopeptide (Lys-Gly) (interchain with G-Cter in ubiquitin). Positions 810-822 are bridging helix; sequence PQEFFFHAMGGRE. Residues Lys1246 and Lys1350 each participate in a glycyl lysine isopeptide (Lys-Gly) (interchain with G-Cter in ubiquitin) cross-link. At Thr1471 the chain carries Phosphothreonine. The segment at 1537–1733 is disordered; the sequence is VSSPGFSPTS…QKHNENENSR (197 aa). The span at 1538–1719 shows a compositional bias: low complexity; the sequence is SSPGFSPTSP…YSPGSPAYSP (182 aa). A run of 23 repeats spans residues 1549–1555, 1556–1562, 1563–1569, 1570–1576, 1577–1583, 1584–1590, 1591–1597, 1598–1604, 1605–1611, 1612–1618, 1619–1625, 1626–1632, 1633–1639, 1640–1646, 1647–1653, 1654–1660, 1661–1667, 1668–1674, 1675–1681, 1682–1688, 1689–1695, 1696–1702, and 1703–1709. Positions 1549–1716 are C-terminal domain (CTD); 24 X 7 AA approximate tandem repeats of Y-S-P-T-S-P-[A-S-N-G]; that stretch reads YSPTSPAYSP…SPGYSPGSPA (168 aa). One copy of the 24; approximate repeat lies at 1710 to 1716; sequence YSPGSPA. The span at 1720-1733 shows a compositional bias: basic and acidic residues; sequence KQDEQKHNENENSR.

Belongs to the RNA polymerase beta' chain family. In terms of assembly, component of the RNA polymerase II (Pol II) complex consisting of 12 subunits. Interacts with DEF1; the interaction is direct and serves to bridge RPB1 to the Elongin complex in a DNA-damaged dependent manner. Interacts with the Elongin subunit ELA1. Interacts with the Elongin subunit ELC1. Interacts with ASK10. Interacts with ESS1. Interacts with RTT103. Interacts with SHE2. The tandem 7 residues repeats in the C-terminal domain (CTD) can be highly phosphorylated. The phosphorylation activates Pol II. Phosphorylation occurs mainly at residues 'Ser-2' and 'Ser-5' of the heptapeptide repeat. The phosphorylated form of Pol II appears to carry, on average, one phosphate per repeat. The phosphorylation state is believed to result from the balanced action of site-specific CTD kinases and phosphatases, and a 'CTD code' that specifies the position of Pol II within the transcription cycle has been proposed. Phosphorylation at 'Ser-5' occurs in promoter-proximal regions in early elongation. Phosphorylation at 'Ser-2' predominates in regions more distal to the promoter and triggers binding of the 3' RNA processing machinery. CTD kinases include KIN28 (as part of the TFKII complex, a subcomplex of the TFIIH holo complex), SSN3/SRB10 (as part of the SRB8-11 complex, a module of the Mediator complex), CTK1 (as part of CTD kinase), and probably BUR1 (as part of the BUR1-BUR2 kinase complex). Phosphatases include FCP1 and SSU72. Post-translationally, following transcription stress, the elongating form of RNA polymerase II (RNA pol IIo) is polyubiquitinated via 'Lys-63'-linkages on Lys-1246 by the RSP5-UBA1-UBC5 complex at DNA damage sites without leading to degradation: ubiquitination promotes RNA pol IIo backtracking to allow access by the transcription-coupled nucleotide excision repair (TC-NER) machinery. Subsequent DEF1-dependent polyubiquitination by the elongin complex via 'Lys-48'-linkages may lead to proteasome-mediated degradation; presumably at stalled RNA pol II where TC-NER has failed, to halt global transcription and enable 'last resort' DNA repair pathways.

It is found in the nucleus. It catalyses the reaction RNA(n) + a ribonucleoside 5'-triphosphate = RNA(n+1) + diphosphate. Its function is as follows. DNA-dependent RNA polymerase catalyzes the transcription of DNA into RNA using the four ribonucleoside triphosphates as substrates. Largest and catalytic component of RNA polymerase II which synthesizes mRNA precursors and many functional non-coding RNAs. Forms the polymerase active center together with the second largest subunit. Pol II is the central component of the basal RNA polymerase II transcription machinery. During a transcription cycle, Pol II, general transcription factors and the Mediator complex assemble as the preinitiation complex (PIC) at the promoter. 11-15 base pairs of DNA surrounding the transcription start site are melted and the single-stranded DNA template strand of the promoter is positioned deeply within the central active site cleft of Pol II to form the open complex. After synthesis of about 30 bases of RNA, Pol II releases its contacts with the core promoter and the rest of the transcription machinery (promoter clearance) and enters the stage of transcription elongation in which it moves on the template as the transcript elongates. Pol II appears to oscillate between inactive and active conformations at each step of nucleotide addition. Elongation is influenced by the phosphorylation status of the C-terminal domain (CTD) of Pol II largest subunit (RPB1), which serves as a platform for assembly of factors that regulate transcription initiation, elongation, termination and mRNA processing. Pol II is composed of mobile elements that move relative to each other. The core element with the central large cleft comprises RPB3, RBP10, RPB11, RPB12 and regions of RPB1 and RPB2 forming the active center. The clamp element (portions of RPB1, RPB2 and RPB3) is connected to the core through a set of flexible switches and moves to open and close the cleft. A bridging helix emanates from RPB1 and crosses the cleft near the catalytic site and is thought to promote translocation of Pol II by acting as a ratchet that moves the RNA-DNA hybrid through the active site by switching from straight to bent conformations at each step of nucleotide addition. In elongating Pol II, the lid loop (RPB1) appears to act as a wedge to drive apart the DNA and RNA strands at the upstream end of the transcription bubble and guide the RNA strand toward the RNA exit groove located near the base of the largely unstructured CTD domain of RPB1. The rudder loop (RPB1) interacts with single-stranded DNA after separation from the RNA strand, likely preventing reassociation with the exiting RNA. The cleft is surrounded by jaws: an upper jaw formed by portions of RBP1, RPB2 and RPB9, and a lower jaw, formed by RPB5 and portions of RBP1. The jaws are thought to grab the incoming DNA template, mainly by RPB5 direct contacts to DNA. This chain is DNA-directed RNA polymerase II subunit RPB1 (RPO21), found in Saccharomyces cerevisiae (strain ATCC 204508 / S288c) (Baker's yeast).